Here is a 1791-residue protein sequence, read N- to C-terminus: Protein TIC 214 (1791 aa).

6 consecutive transmembrane segments (helical) span residues 19–39 (IINS…FSIG), 68–88 (FIAG…HLAL), 91–111 (PHTI…WNNH), 133–153 (VFLN…SSML), 176–196 (VGWL…LVWI), and 230–250 (IFSI…PSPI). Residues 257–271 (GTSETEERGGTKQDQ) show a composition bias toward basic and acidic residues. Disordered regions lie at residues 257–278 (GTSE…TEEA) and 1498–1521 (ADQG…PNQE).

The protein belongs to the TIC214 family. As to quaternary structure, part of the Tic complex.

Its subcellular location is the plastid. The protein localises to the chloroplast inner membrane. Its function is as follows. Involved in protein precursor import into chloroplasts. May be part of an intermediate translocation complex acting as a protein-conducting channel at the inner envelope. This chain is Protein TIC 214, found in Aethionema grandiflorum (Persian stone-cress).